A 53-amino-acid polypeptide reads, in one-letter code: UPF0391 membrane protein BURPS1106A_A2993 (53 aa).

A run of 2 helical transmembrane segments spans residues 5–25 (ALIF…GIAA) and 30–50 (IAKI…VLGV).

This sequence belongs to the UPF0391 family.

The protein localises to the cell membrane. This is UPF0391 membrane protein BURPS1106A_A2993 from Burkholderia pseudomallei (strain 1106a).